The following is a 126-amino-acid chain: Small ribosomal subunit protein uS13 (126 aa).

A disordered region spans residues 92 to 126 (HRRGLPVRGQRTKTNARTRKGPKRTVAGKKKAGRK).

It belongs to the universal ribosomal protein uS13 family. In terms of assembly, part of the 30S ribosomal subunit. Forms a loose heterodimer with protein S19. Forms two bridges to the 50S subunit in the 70S ribosome.

In terms of biological role, located at the top of the head of the 30S subunit, it contacts several helices of the 16S rRNA. In the 70S ribosome it contacts the 23S rRNA (bridge B1a) and protein L5 of the 50S subunit (bridge B1b), connecting the 2 subunits; these bridges are implicated in subunit movement. Contacts the tRNAs in the A and P-sites. In Kineococcus radiotolerans (strain ATCC BAA-149 / DSM 14245 / SRS30216), this protein is Small ribosomal subunit protein uS13.